A 501-amino-acid polypeptide reads, in one-letter code: ATP synthase subunit alpha (501 aa).

ATP is bound at residue 169 to 176; sequence GDRQTGKT.

Belongs to the ATPase alpha/beta chains family. As to quaternary structure, F-type ATPases have 2 components, CF(1) - the catalytic core - and CF(0) - the membrane proton channel. CF(1) has five subunits: alpha(3), beta(3), gamma(1), delta(1), epsilon(1). CF(0) has three main subunits: a(1), b(2) and c(9-12). The alpha and beta chains form an alternating ring which encloses part of the gamma chain. CF(1) is attached to CF(0) by a central stalk formed by the gamma and epsilon chains, while a peripheral stalk is formed by the delta and b chains.

Its subcellular location is the cell membrane. It carries out the reaction ATP + H2O + 4 H(+)(in) = ADP + phosphate + 5 H(+)(out). Functionally, produces ATP from ADP in the presence of a proton gradient across the membrane. The alpha chain is a regulatory subunit. In Streptococcus pneumoniae (strain 70585), this protein is ATP synthase subunit alpha.